A 155-amino-acid polypeptide reads, in one-letter code: Ribosome maturation factor RimP (155 aa).

The protein belongs to the RimP family.

It localises to the cytoplasm. Its function is as follows. Required for maturation of 30S ribosomal subunits. This Prochlorococcus marinus (strain MIT 9301) protein is Ribosome maturation factor RimP.